We begin with the raw amino-acid sequence, 286 residues long: MKNILSIQSHVVYGYAGNKSATFPMQLLGVDVWALNTVQFSNHTQYGKWKGIVMPKEQIGEIIQGIDEIGELAKCDAVLSGYIGSAEQVTEIVNAFHTVKSRNPNAIYLCDPVMGHPDKGRIVADGVKEGLIKQAMAHADIITPNLVELRELSGLRVENFEQAIEAVKVILTKGPKKVLVKHLSKVGKQADKFEMFFATEEGIWHISRPLYQFDKEPVGVGDLTAGLFLANLLNGKSDIEAFEHTANAVNDVMEVTANSGVYELQIIAAREFILTPRSQYKAIKIV.

Substrate-binding positions include Ser-9 and 44–45 (TQ). ATP contacts are provided by Asp-111, Glu-148, and Lys-181. Position 222 (Asp-222) interacts with substrate.

The protein belongs to the pyridoxine kinase family. PdxY subfamily. In terms of assembly, homodimer. The cofactor is Mg(2+).

The enzyme catalyses pyridoxal + ATP = pyridoxal 5'-phosphate + ADP + H(+). The protein operates within cofactor metabolism; pyridoxal 5'-phosphate salvage; pyridoxal 5'-phosphate from pyridoxal: step 1/1. Functionally, pyridoxal kinase involved in the salvage pathway of pyridoxal 5'-phosphate (PLP). Catalyzes the phosphorylation of pyridoxal to PLP. The protein is Pyridoxal kinase PdxY of Actinobacillus pleuropneumoniae serotype 5b (strain L20).